Consider the following 717-residue polypeptide: Polyribonucleotide nucleotidyltransferase (717 aa).

2 residues coordinate Mg(2+): Asp495 and Asp501. The 63-residue stretch at 562–624 (PRMIMIQIPK…TALDSALSQI (63 aa)) folds into the KH domain. The region spanning 634 to 703 (GEVYEGKVKS…KTGKYRLSRK (70 aa)) is the S1 motif domain.

Belongs to the polyribonucleotide nucleotidyltransferase family. Mg(2+) is required as a cofactor.

The protein localises to the cytoplasm. It catalyses the reaction RNA(n+1) + phosphate = RNA(n) + a ribonucleoside 5'-diphosphate. Its function is as follows. Involved in mRNA degradation. Catalyzes the phosphorolysis of single-stranded polyribonucleotides processively in the 3'- to 5'-direction. The polypeptide is Polyribonucleotide nucleotidyltransferase (Cytophaga hutchinsonii (strain ATCC 33406 / DSM 1761 / CIP 103989 / NBRC 15051 / NCIMB 9469 / D465)).